The primary structure comprises 210 residues: Orotate phosphoribosyltransferase (210 aa).

Residues R94, K98, H100, and 120-128 each bind 5-phospho-alpha-D-ribose 1-diphosphate; that span reads EDLISTGGS. S124 is a binding site for orotate.

This sequence belongs to the purine/pyrimidine phosphoribosyltransferase family. PyrE subfamily. Homodimer. The cofactor is Mg(2+).

It catalyses the reaction orotidine 5'-phosphate + diphosphate = orotate + 5-phospho-alpha-D-ribose 1-diphosphate. The protein operates within pyrimidine metabolism; UMP biosynthesis via de novo pathway; UMP from orotate: step 1/2. Functionally, catalyzes the transfer of a ribosyl phosphate group from 5-phosphoribose 1-diphosphate to orotate, leading to the formation of orotidine monophosphate (OMP). The polypeptide is Orotate phosphoribosyltransferase (Bacillus anthracis (strain A0248)).